Here is a 31-residue protein sequence, read N- to C-terminus: Scolopendra 4610.56 Da toxin (31 aa).

The protein belongs to the scolopendra toxin 1 family. Contains one or more disulfide bonds. In terms of tissue distribution, expressed by the venom gland.

The protein localises to the secreted. This is Scolopendra 4610.56 Da toxin from Scolopendra viridicornis nigra (Brazilian giant centipede).